A 730-amino-acid polypeptide reads, in one-letter code: Kinesin-like protein KIF2C (730 aa).

The interval 1 to 256 is globular; sequence MERLVATRLV…MDCHRISMAD (256 aa). Residues 79 to 98 are disordered; that stretch reads NMPPQRNVSSQNHKRKTISK. Residues 211-242 form a negative regulator of microtubule-binding region; it reads EQRAQNYERRMKRAQDYDTSVPNWEFGKMIKE. The Kinesin motor domain occupies 262 to 592; the sequence is RICVCVRKRP…LRYADRVKEL (331 aa). Residues Arg268 and 352–359 contribute to the ATP site; that span reads GQTGSGKT. Residues 599–730 adopt a coiled-coil conformation; it reads TNDDNLQMED…QISKKKRSNK (132 aa).

This sequence belongs to the TRAFAC class myosin-kinesin ATPase superfamily. Kinesin family. MCAK/KIF2 subfamily.

It is found in the cytoplasm. It localises to the cytoskeleton. The protein resides in the nucleus. Its subcellular location is the chromosome. The protein localises to the centromere. It is found in the kinetochore. Functionally, promotes ATP-dependent removal of tubulin dimers from microtubules. Regulates the turnover of microtubules at the kinetochore and functions in chromosome segregation during mitosis. May play a role in chromosome congression and may be required for the lateral to end-on conversion of the chromosome-microtubule attachment. In Xenopus laevis (African clawed frog), this protein is Kinesin-like protein KIF2C (kif2c).